Here is a 901-residue protein sequence, read N- to C-terminus: Protein translocase subunit SecA (901 aa).

Residues Gln87, 105–109 (GEGKT), and Asp512 each bind ATP. Residues Cys885, Cys887, Cys896, and His897 each contribute to the Zn(2+) site.

Belongs to the SecA family. As to quaternary structure, monomer and homodimer. Part of the essential Sec protein translocation apparatus which comprises SecA, SecYEG and auxiliary proteins SecDF-YajC and YidC. Zn(2+) is required as a cofactor.

It is found in the cell inner membrane. The protein localises to the cytoplasm. The catalysed reaction is ATP + H2O + cellular proteinSide 1 = ADP + phosphate + cellular proteinSide 2.. Functionally, part of the Sec protein translocase complex. Interacts with the SecYEG preprotein conducting channel. Has a central role in coupling the hydrolysis of ATP to the transfer of proteins into and across the cell membrane, serving both as a receptor for the preprotein-SecB complex and as an ATP-driven molecular motor driving the stepwise translocation of polypeptide chains across the membrane. The sequence is that of Protein translocase subunit SecA from Salmonella paratyphi A (strain ATCC 9150 / SARB42).